The chain runs to 374 residues: RNA ligase 1 (374 aa).

Residues tyrosine 37, arginine 54, and lysine 75 each coordinate ATP. The active-site N6-AMP-lysine intermediate is lysine 99. ATP is bound by residues glutamate 159, lysine 240, and lysine 242. Aspartate 272 contacts Mg(2+).

Belongs to the Tequatrovirus RNA ligase 1 family. The cofactor is Mg(2+).

The catalysed reaction is ATP + (ribonucleotide)n-3'-hydroxyl + 5'-phospho-(ribonucleotide)m = (ribonucleotide)n+m + AMP + diphosphate.. Involved in countering a host defense mechanism which, following viral infection, activates the host anticodon nuclease and shuts off viral translation. Repairs 5'-PO4 and 3'-OH groups in the cleaved host tRNA. The nick ligation reaction entails three nucleotidyl transfer steps. In the first step, the RNA ligase reacts with ATP in the absence of nucleic acid to form a covalent ligase-AMP intermediate and release pyrophosphate. In step 2, the ligase-AMP binds to the nicked duplex nucleic acid and transfers the adenylate to the 5'-PO4 terminus to form an adenylylated nicked intermediate. In step 3, the RNA ligase directs the attack of the nick 3'-OH on the 5'-phosphoanhydride linkage, resulting in a repaired 3'-5' phosphodiester and release of AMP. In Enterobacteria phage T4 (Bacteriophage T4), this protein is RNA ligase 1 (63).